The primary structure comprises 172 residues: GTP-dependent dephospho-CoA kinase (172 aa).

Asp49, Val50, Val51, Asp68, Lys70, and Glu120 together coordinate GTP.

It belongs to the GTP-dependent DPCK family.

The enzyme catalyses 3'-dephospho-CoA + GTP = GDP + CoA + H(+). It functions in the pathway cofactor biosynthesis; coenzyme A biosynthesis. Its function is as follows. Catalyzes the GTP-dependent phosphorylation of the 3'-hydroxyl group of dephosphocoenzyme A to form coenzyme A (CoA). The polypeptide is GTP-dependent dephospho-CoA kinase (Pyrobaculum arsenaticum (strain DSM 13514 / JCM 11321 / PZ6)).